The sequence spans 291 residues: Protease HtpX (291 aa).

The next 2 membrane-spanning stretches (helical) occupy residues 4-24 and 32-52; these read IILFLLTNLAVVCVFGFILSF and ISGLLIFSSIFGFSGSIISLL. His139 contacts Zn(2+). Glu140 is a catalytic residue. Residue His143 participates in Zn(2+) binding. The next 2 membrane-spanning stretches (helical) occupy residues 158–178 and 192–212; these read IVNTFVIFISRIIAQFASSIL and WVYIICSTILELIFGIFASII. Glu221 contributes to the Zn(2+) binding site.

Belongs to the peptidase M48B family. Zn(2+) serves as cofactor.

The protein resides in the cell membrane. The protein is Protease HtpX of Buchnera aphidicola subsp. Baizongia pistaciae (strain Bp).